Here is a 361-residue protein sequence, read N- to C-terminus: S-adenosylmethionine:tRNA ribosyltransferase-isomerase (361 aa).

The protein belongs to the QueA family. In terms of assembly, monomer.

It localises to the cytoplasm. It carries out the reaction 7-aminomethyl-7-carbaguanosine(34) in tRNA + S-adenosyl-L-methionine = epoxyqueuosine(34) in tRNA + adenine + L-methionine + 2 H(+). It functions in the pathway tRNA modification; tRNA-queuosine biosynthesis. In terms of biological role, transfers and isomerizes the ribose moiety from AdoMet to the 7-aminomethyl group of 7-deazaguanine (preQ1-tRNA) to give epoxyqueuosine (oQ-tRNA). The polypeptide is S-adenosylmethionine:tRNA ribosyltransferase-isomerase (Afipia carboxidovorans (strain ATCC 49405 / DSM 1227 / KCTC 32145 / OM5) (Oligotropha carboxidovorans)).